A 156-amino-acid polypeptide reads, in one-letter code: Endoribonuclease YbeY (156 aa).

Zn(2+) is bound by residues H122, H126, and H132.

Belongs to the endoribonuclease YbeY family. Zn(2+) serves as cofactor.

It is found in the cytoplasm. In terms of biological role, single strand-specific metallo-endoribonuclease involved in late-stage 70S ribosome quality control and in maturation of the 3' terminus of the 16S rRNA. The protein is Endoribonuclease YbeY of Pediococcus pentosaceus (strain ATCC 25745 / CCUG 21536 / LMG 10740 / 183-1w).